Reading from the N-terminus, the 435-residue chain is GTPase Der (435 aa).

EngA-type G domains are found at residues 2-167 (ATVV…RESG) and 178-351 (PKIA…ESYC). Residues 8–15 (GRANVGKS), 55–59 (DTCGV), 118–121 (NKSE), 184–191 (GKPNVGKS), 231–235 (DTAGM), and 297–300 (NKFD) each bind GTP. A KH-like domain is found at 352 to 435 (RKVPQQLLSK…PLVIEFKSRR (84 aa)).

Belongs to the TRAFAC class TrmE-Era-EngA-EngB-Septin-like GTPase superfamily. EngA (Der) GTPase family. As to quaternary structure, associates with the 50S ribosomal subunit.

Its function is as follows. GTPase that plays an essential role in the late steps of ribosome biogenesis. The polypeptide is GTPase Der (Pseudothermotoga lettingae (strain ATCC BAA-301 / DSM 14385 / NBRC 107922 / TMO) (Thermotoga lettingae)).